Reading from the N-terminus, the 372-residue chain is Protein phosphatase Mn(2+)-dependent 1K (372 aa).

Residues 1–29 (MSTAALITLVRSGGNQVRRRVLLSSRLLQ) constitute a mitochondrion transit peptide. Residues 34-55 (VTPTCHSSTSEPRCSRFDPDGS) are disordered. Residues 46 to 61 (RCSRFDPDGSGSPATW) form a critical for association with the BCKDH complex region. The 253-residue stretch at 94–346 (NVGCASQIGK…DNSTAVVVPF (253 aa)) folds into the PPM-type phosphatase domain. Aspartate 127 and glycine 128 together coordinate Mn(2+). Serine 248 is modified (phosphoserine). Residues aspartate 298 and aspartate 337 each coordinate Mn(2+).

The protein belongs to the PP2C family. Monomer. Interacts with E1 and E2 components of the branched-chain alpha-ketoacid dehydrogenase (BCKDH) complex; this interaction requires colocalization in mitochondria. Interacts with BCKDHA but not with BCKDHB of the E1 component. Interacts with the 24-meric E2 core composed of DBT monomers with a 24:1 stoichiometry; the N-terminal region (residues 49-61) of PPM1K and C-terminal linker of the lipoyl domain of DBT (residues 145-160) are critical for this interaction, whereas the lipoyl prosthetic group is dispensable. Competes with BCKDK for binding to the E2 core; this interaction is modulated by branched-chain alpha-keto acids. At steady state, BCKDH holoenzyme preferentially binds BCKDK and BCKDHA is phosphorylated. In response to high levels of branched-chain alpha-keto acids, the inhibitory BCKDK is replaced by activating PPM1K leading to BCKDHA dephosphorylation and BCAA degradation. Mn(2+) serves as cofactor.

The protein resides in the mitochondrion matrix. It catalyses the reaction O-phospho-L-seryl-[3-methyl-2-oxobutanoate dehydrogenase] + H2O = L-seryl-[3-methyl-2-oxobutanoate dehydrogenase] + phosphate. The catalysed reaction is O-phospho-L-seryl-[protein] + H2O = L-seryl-[protein] + phosphate. Its pathway is protein modification. With respect to regulation, up-regulated upon interaction with the 24-meric DBT/E2 core of the BCKDH complex. Inhibited by Mg(2+) and Ca(2+) ions likely by competing with Mn(2+) ions for binding to the same metal-binding sites. Its function is as follows. Serine/threonine-protein phosphatase component of macronutrients metabolism. Forms a functional kinase and phosphatase pair with BCKDK, serving as a metabolic regulatory node that coordinates branched-chain amino acids (BCAAs) with glucose and lipid metabolism via two distinct phosphoprotein targets: mitochondrial BCKDHA subunit of the branched-chain alpha-ketoacid dehydrogenase (BCKDH) complex and cytosolic ACLY, a lipogenic enzyme of Krebs cycle. At high levels of branched-chain ketoacids, dephosphorylates and activates mitochondrial BCKDH complex, a multisubunit complex consisting of three multimeric components each involved in different steps of BCAA catabolism: E1 composed of BCKDHA and BCKDHB, E2 core composed of DBT monomers, and E3 composed of DLD monomers. Tightly associates with the E2 component of BCKDH complex and dephosphorylates BCKDHA on Ser-337. Regulates the reversible phosphorylation of ACLY in response to changes in cellular carbohydrate abundance such as occurs during fasting to feeding metabolic transition. At fasting state, appears to dephosphorylate ACLY on Ser-455 and inactivate it. Refeeding stimulates MLXIPL/ChREBP transcription factor, leading to increased BCKDK to PPM1K expression ratio, phosphorylation and activation of ACLY that ultimately results in the generation of malonyl-CoA and oxaloacetate immediate substrates of de novo lipogenesis and gluconeogenesis, respectively. Recognizes phosphosites having SxS or RxxS motifs and strictly depends on Mn(2+) ions for the phosphatase activity. Regulates Ca(2+)-induced opening of mitochondrial transition pore and apoptotic cell death. This chain is Protein phosphatase Mn(2+)-dependent 1K, found in Homo sapiens (Human).